A 359-amino-acid chain; its full sequence is Methylthioribose-1-phosphate isomerase (359 aa).

Residues 50–52 (RGA), arginine 93, and glutamine 200 each bind substrate. Residue aspartate 241 is the Proton donor of the active site. 251–252 (NK) lines the substrate pocket.

The protein belongs to the eIF-2B alpha/beta/delta subunits family. MtnA subfamily.

The catalysed reaction is 5-(methylsulfanyl)-alpha-D-ribose 1-phosphate = 5-(methylsulfanyl)-D-ribulose 1-phosphate. Its pathway is amino-acid biosynthesis; L-methionine biosynthesis via salvage pathway; L-methionine from S-methyl-5-thio-alpha-D-ribose 1-phosphate: step 1/6. Its function is as follows. Catalyzes the interconversion of methylthioribose-1-phosphate (MTR-1-P) into methylthioribulose-1-phosphate (MTRu-1-P). This Symbiobacterium thermophilum (strain DSM 24528 / JCM 14929 / IAM 14863 / T) protein is Methylthioribose-1-phosphate isomerase.